Here is a 38-residue protein sequence, read N- to C-terminus: Alpha-2-macroglobulin homolog (38 aa).

A cross-link (isoglutamyl cysteine thioester (Cys-Gln)) is located at residues 27-30; that stretch reads CGEQ.

Belongs to the protease inhibitor I39 (alpha-2-macroglobulin) family. As to quaternary structure, homodimer; disulfide-linked. In terms of tissue distribution, hemolymph.

It localises to the secreted. In terms of biological role, is able to inhibit all four classes of proteinases by a unique 'trapping' mechanism. This protein has a peptide stretch, called the 'bait region' which contains specific cleavage sites for different proteinases. When a proteinase cleaves the bait region, a conformational change is induced in the protein which traps the proteinase. The entrapped enzyme remains active against low molecular weight substrates (activity against high molecular weight substrates is greatly reduced). Following cleavage in the bait region a thioester bond is hydrolyzed and mediates the covalent binding of the protein to the proteinase. In Homarus americanus (American lobster), this protein is Alpha-2-macroglobulin homolog.